The chain runs to 868 residues: Monofunctional pimaradiene synthase (868 aa).

Mg(2+) contacts are provided by Asp-620, Asp-624, Asn-764, Thr-768, and Glu-772.

Belongs to the terpene synthase family. Tpsd subfamily. Mg(2+) is required as a cofactor.

It catalyses the reaction (+)-copalyl diphosphate = (-)-pimara-8(14),15-diene + diphosphate. It functions in the pathway terpene metabolism; oleoresin biosynthesis. Functionally, involved in defensive oleoresin formation in conifers in response to insect attack or other injury. Involved in diterpene (C20) olefins biosynthesis. Monofunctional enzyme lacking the DXDD motif in the class II active site relevant for the cyclization of geranylgeranyl diphosphate (GGPP). Requires (+)-copalyl diphosphate ((+)-CPP) as substrate, but no activity with GGPP or ent-CPP. Pimaradiene is the major products of the enzyme. This is Monofunctional pimaradiene synthase from Pinus banksiana (Jack pine).